The following is a 109-amino-acid chain: Aquaporin-2 (109 aa).

The Cytoplasmic segment spans residues 1–6 (SIAFSR). The helical transmembrane segment at 7 to 27 (AVLSEFLATLLFVFFGLGSAL) threads the bilayer. Topologically, residues 28-35 (NWPQALPS) are extracellular. A helical membrane pass occupies residues 36–54 (VLQIAMAFGLAIGTLVQTL). Topologically, residues 55–59 (GHISG) are cytoplasmic. The discontinuously helical intramembrane region spans 60-69 (AHINPAVTIA). Positions 63 to 65 (NPA) match the NPA 1 motif. Over 70-80 (CLVGCHVSFLR) the chain is Cytoplasmic. The helical transmembrane segment at 81–102 (ALFYLAAQLLGAVAGAALLHEL) threads the bilayer. At 103-109 (TPPDIRG) the chain is on the extracellular side.

It belongs to the MIP/aquaporin (TC 1.A.8) family. Homotetramer. Post-translationally, serine phosphorylation is necessary and sufficient for expression at the apical membrane. Endocytosis is not phosphorylation-dependent. N-glycosylated.

It is found in the apical cell membrane. It localises to the basolateral cell membrane. The protein resides in the cell membrane. Its subcellular location is the cytoplasmic vesicle membrane. The protein localises to the golgi apparatus. It is found in the trans-Golgi network membrane. The catalysed reaction is H2O(in) = H2O(out). The enzyme catalyses glycerol(in) = glycerol(out). Functionally, forms a water-specific channel that provides the plasma membranes of renal collecting duct with high permeability to water, thereby permitting water to move in the direction of an osmotic gradient. Plays an essential role in renal water homeostasis. Could also be permeable to glycerol. The sequence is that of Aquaporin-2 from Procavia capensis habessinica (Abyssinian hyrax).